The chain runs to 499 residues: Glycolate oxidase subunit GlcD (499 aa).

The 179-residue stretch at 52–230 (YRTRPLLVVL…TEVTVKLLPK (179 aa)) folds into the FAD-binding PCMH-type domain.

This sequence belongs to the FAD-binding oxidoreductase/transferase type 4 family. As to quaternary structure, the glycolate oxidase likely consists of three subunits, GlcD, GlcE and GlcF. FAD is required as a cofactor.

The protein resides in the cell inner membrane. The enzyme catalyses glycolate + A = glyoxylate + AH2. It catalyses the reaction (R)-lactate + A = pyruvate + AH2. Its function is as follows. Component of a complex that catalyzes the oxidation of glycolate to glyoxylate. Is required for E.coli to grow on glycolate as a sole source of carbon. Is also able to oxidize D-lactate ((R)-lactate) with a similar rate. Does not link directly to O(2), and 2,6-dichloroindophenol (DCIP) and phenazine methosulfate (PMS) can act as artificial electron acceptors in vitro, but the physiological molecule that functions as a primary electron acceptor during glycolate oxidation is unknown. This chain is Glycolate oxidase subunit GlcD (glcD), found in Escherichia coli O6:H1 (strain CFT073 / ATCC 700928 / UPEC).